We begin with the raw amino-acid sequence, 212 residues long: 2-phospho-L-lactate guanylyltransferase (212 aa).

It belongs to the CofC family. As to quaternary structure, homodimer.

The catalysed reaction is (2S)-2-phospholactate + GTP + H(+) = (2S)-lactyl-2-diphospho-5'-guanosine + diphosphate. The protein operates within cofactor biosynthesis; coenzyme F420 biosynthesis. Functionally, guanylyltransferase that catalyzes the activation of (2S)-2-phospholactate (2-PL) as (2S)-lactyl-2-diphospho-5'-guanosine, via the condensation of 2-PL with GTP. It is involved in the biosynthesis of coenzyme F420, a hydride carrier cofactor. The polypeptide is 2-phospho-L-lactate guanylyltransferase (Methanocorpusculum labreanum (strain ATCC 43576 / DSM 4855 / Z)).